Here is a 591-residue protein sequence, read N- to C-terminus: V-type ATP synthase alpha chain (591 aa).

ATP is bound at residue 242–249 (GPFGAGKT).

It belongs to the ATPase alpha/beta chains family.

The catalysed reaction is ATP + H2O + 4 H(+)(in) = ADP + phosphate + 5 H(+)(out). Functionally, produces ATP from ADP in the presence of a proton gradient across the membrane. The V-type alpha chain is a catalytic subunit. In Chlamydia abortus (strain DSM 27085 / S26/3) (Chlamydophila abortus), this protein is V-type ATP synthase alpha chain.